A 592-amino-acid chain; its full sequence is Bifunctional purine biosynthesis protein ATIC (592 aa).

Residue M1 is modified to N-acetylmethionine. The MGS-like domain maps to 1–146 (MAPSQLALFS…KNHARVTVVC (146 aa)). The IMP cyclohydrolase stretch occupies residues 1-198 (MAPSQLALFS…ISDYFRKQYS (198 aa)). IMP-binding positions include 12–14 (SDK), 34–37 (SGGT), 64–67 (RVKT), 101–102 (CN), and 125–126 (DI). The active-site Proton donor/acceptor; for FAICAR cyclization activity is the K137. K199 is modified (N6-acetyllysine). The AICAR formyltransferase stretch occupies residues 199-592 (KGISQMPLRY…AHTDLRLFHH (394 aa)). 5-amino-1-(5-phospho-beta-D-ribosyl)imidazole-4-carboxamide contacts are provided by residues 207–208 (RY), H267, G316, D339, N431, and R451. H267 (proton acceptor; for AICAR formyltransferase activity) is an active-site residue. I452 is a (6R)-10-formyltetrahydrofolate binding site. F541 contacts 5-amino-1-(5-phospho-beta-D-ribosyl)imidazole-4-carboxamide. Residues D546 and 565 to 566 (ST) contribute to the (6R)-10-formyltetrahydrofolate site. R588 provides a ligand contact to 5-amino-1-(5-phospho-beta-D-ribosyl)imidazole-4-carboxamide.

It belongs to the PurH family. As to quaternary structure, homodimer. Associates with internalized INSR complexes on Golgi/endosomal membranes. Interacts with INSR; ATIC together with PRKAA2/AMPK2 and HACD3/PTPLAD1 is proposed to be part of a signaling network regulating INSR autophosphorylation and endocytosis.

The protein resides in the cytoplasm. It is found in the cytosol. It carries out the reaction (6R)-10-formyltetrahydrofolate + 5-amino-1-(5-phospho-beta-D-ribosyl)imidazole-4-carboxamide = 5-formamido-1-(5-phospho-D-ribosyl)imidazole-4-carboxamide + (6S)-5,6,7,8-tetrahydrofolate. It catalyses the reaction 10-formyldihydrofolate + 5-amino-1-(5-phospho-beta-D-ribosyl)imidazole-4-carboxamide = 5-formamido-1-(5-phospho-D-ribosyl)imidazole-4-carboxamide + 7,8-dihydrofolate. The catalysed reaction is IMP + H2O = 5-formamido-1-(5-phospho-D-ribosyl)imidazole-4-carboxamide. It functions in the pathway purine metabolism; IMP biosynthesis via de novo pathway; 5-formamido-1-(5-phospho-D-ribosyl)imidazole-4-carboxamide from 5-amino-1-(5-phospho-D-ribosyl)imidazole-4-carboxamide (10-formyl THF route): step 1/1. Its pathway is purine metabolism; IMP biosynthesis via de novo pathway; IMP from 5-formamido-1-(5-phospho-D-ribosyl)imidazole-4-carboxamide: step 1/1. AMP and XMP inhibit AICAR formyltransferase activity. AICAR formyltransferase activity is inhibited by N-(6-fluoro-1-oxo-1,2-dihydroisoquinolin-7-yl)-5- [(3R)-3-hydroxypyrrolidin-1-yl]thiophene-2-sulfonamide (LSN 3213128), which acts as a tumor suppression in cancer cell lines. In terms of biological role, bifunctional enzyme that catalyzes the last two steps of purine biosynthesis. Acts as a transformylase that incorporates a formyl group to the AMP analog AICAR (5-amino-1-(5-phospho-beta-D-ribosyl)imidazole-4-carboxamide) to produce the intermediate formyl-AICAR (FAICAR). Also displays cyclohydrolase activity involving the cyclization of FAICAR to inosine monophosphate (IMP). Can use both 10-formyldihydrofolate and 10-formyltetrahydrofolate as the formyl donor in this reaction. Also catalyzes the cyclization of FAICAR to IMP. Promotes insulin receptor/INSR autophosphorylation and is involved in INSR internalization. The protein is Bifunctional purine biosynthesis protein ATIC (Atic) of Mus musculus (Mouse).